A 118-amino-acid polypeptide reads, in one-letter code: V-type proton ATPase subunit G 1 (118 aa).

N-acetylalanine is present on Ala-2. The interval 19–42 (AEKVSEARKRKNRRLKQAKEEAQA) is disordered.

The protein belongs to the V-ATPase G subunit family. V-ATPase is a heteromultimeric enzyme made up of two complexes: the ATP-hydrolytic V1 complex and the proton translocation V0 complex. The V1 complex consists of three catalytic AB heterodimers that form a heterohexamer, three peripheral stalks each consisting of EG heterodimers, one central rotor including subunits D and F, and the regulatory subunits C and H. The proton translocation complex V0 consists of the proton transport subunit a, a ring of proteolipid subunits c9c'', rotary subunit d, subunits e and f, and the accessory subunits ATP6AP1/Ac45 and ATP6AP2/PRR. In terms of tissue distribution, brain, heart, kidney and spleen.

Its subcellular location is the apical cell membrane. Its function is as follows. Subunit of the V1 complex of vacuolar(H+)-ATPase (V-ATPase), a multisubunit enzyme composed of a peripheral complex (V1) that hydrolyzes ATP and a membrane integral complex (V0) that translocates protons. V-ATPase is responsible for acidifying and maintaining the pH of intracellular compartments and in some cell types, is targeted to the plasma membrane, where it is responsible for acidifying the extracellular environment. In aerobic conditions, involved in intracellular iron homeostasis, thus triggering the activity of Fe(2+) prolyl hydroxylase (PHD) enzymes, and leading to HIF1A hydroxylation and subsequent proteasomal degradation. The chain is V-type proton ATPase subunit G 1 (ATP6V1G1) from Bos taurus (Bovine).